Consider the following 659-residue polypeptide: Zinc finger protein 304 (659 aa).

In terms of domain architecture, KRAB spans 14-88; sequence VTFEDVFVYF…TAESGLFQKA (75 aa). 16 C2H2-type zinc fingers span residues 89–111, 115–139, 251–273, 279–301, 307–329, 335–357, 363–385, 391–413, 419–441, 447–469, 475–497, 503–525, 531–553, 559–581, 587–609, and 615–637; these read HPCE…QGSH, KLCT…QKQH, FRCL…RKIH, HVCK…QKFH, YTCS…QRVH, YDCS…QRIH, YKCN…QRFH, YECS…WRIH, YECI…RRVH, YVCS…QIIH, YECS…QKIH, YECG…QRIH, YECN…QRVH, YVCS…KKVH, YECS…QRVH, and YVCS…QKAH.

The protein belongs to the krueppel C2H2-type zinc-finger protein family. Probably part of a corepressor complex containing ZNF304, TRIM28, SETDB1 and DNMT1; leading to promoter hypermethylation and transcriptional silencing. Probably associates with Polycomb group (PcG) complexes; leading to trimethylation of 'Lys-27' of histone H3 (H3K27me3). Interacts with USP28. In terms of processing, deubiquitinated by USP28; the deubiquitination leads to the stabilization of ZNF304 from proteolytic degradation. In terms of tissue distribution, expressed in undifferentiated embryonic stem cells (ESCs). Expressed strongly in colorectal cancers cells (CRCs). Expressed strongly in ovarian carcinoma (OC) tumor cell lines compared to non-transformed ovarian epithelial cells (at protein level). Expressed in lymphoid tissues, thyroid, adrenal gland, prostate, pancreas and skeletal muscles.

Its subcellular location is the nucleus. In terms of biological role, acts as a transcriptional regulator and plays a role in gene silencing. Probably forms a corepressor complex required for activated KRAS-mediated promoter hypermethylation and transcriptional silencing of several tumor suppressor genes (TSGs) or other tumor-related genes in colorectal cancer (CRC) cells. Also required to maintain a transcriptionally repressive state of genes in undifferentiated embryonic stem cells (ESCs) by inducing trimethylation of 'Lys-27' of histone H3 (H3K27me3) in a Polycomb group (PcG) complexes-dependent manner. Associates at promoter regions of TSGs and mediates the recruitment of the corepressor complex containing the scaffolding protein TRIM28, methyltransferase DNMT1 and histone methyltransferase SETDB1 and/or the PcG complexes at those sites. Transcription factor involved in the metastatic cascade process by inducing cell migration and proliferation and gain resistance to anoikis of ovarian carcinoma (OC) cells via integrin-mediated signaling pathways. Associates with the ITGB1 promoter and positively regulates beta-1 integrin transcription expression. Promotes angiogenesis. Promotes tumor growth. This Homo sapiens (Human) protein is Zinc finger protein 304.